The primary structure comprises 99 residues: Small ribosomal subunit protein uS17 (99 aa).

It belongs to the universal ribosomal protein uS17 family. In terms of assembly, part of the 30S ribosomal subunit.

Functionally, one of the primary rRNA binding proteins, it binds specifically to the 5'-end of 16S ribosomal RNA. The sequence is that of Small ribosomal subunit protein uS17 from Thermosipho africanus (strain TCF52B).